Consider the following 45-residue polypeptide: Large ribosomal subunit protein bL34 (45 aa).

A disordered region spans residues 1 to 45; that stretch reads MTKRTLGGTVRKQKRTSGFRARMRSHTGQNVIRARRKKGRHRLTV. 2 stretches are compositionally biased toward basic residues: residues 11–25 and 33–45; these read RKQK…RMRS and RARR…RLTV.

It belongs to the bacterial ribosomal protein bL34 family.

This is Large ribosomal subunit protein bL34 from Picosynechococcus sp. (strain ATCC 27264 / PCC 7002 / PR-6) (Agmenellum quadruplicatum).